Here is a 536-residue protein sequence, read N- to C-terminus: Phosphoenolpyruvate carboxykinase (ATP) (536 aa).

Substrate-binding residues include arginine 62, tyrosine 203, and lysine 209. ATP contacts are provided by residues lysine 209, histidine 228, and glycine 244–threonine 252. Residues lysine 209 and histidine 228 each coordinate Mn(2+). Aspartate 265 contributes to the Mn(2+) binding site. Residues glutamate 293, arginine 329, arginine 445 to isoleucine 446, and threonine 451 contribute to the ATP site. Arginine 329 is a binding site for substrate.

It belongs to the phosphoenolpyruvate carboxykinase (ATP) family. Monomer. It depends on Mn(2+) as a cofactor.

Its subcellular location is the cytoplasm. The enzyme catalyses oxaloacetate + ATP = phosphoenolpyruvate + ADP + CO2. It functions in the pathway carbohydrate biosynthesis; gluconeogenesis. Involved in the gluconeogenesis. Catalyzes the conversion of oxaloacetate (OAA) to phosphoenolpyruvate (PEP) through direct phosphoryl transfer between the nucleoside triphosphate and OAA. In Actinobacillus pleuropneumoniae serotype 7 (strain AP76), this protein is Phosphoenolpyruvate carboxykinase (ATP).